A 612-amino-acid chain; its full sequence is Arginine--tRNA ligase (612 aa).

A 'HIGH' region motif is present at residues 152-162 (PNIAKEMHVGH).

Belongs to the class-I aminoacyl-tRNA synthetase family. In terms of assembly, monomer.

The protein localises to the cytoplasm. The catalysed reaction is tRNA(Arg) + L-arginine + ATP = L-arginyl-tRNA(Arg) + AMP + diphosphate. This chain is Arginine--tRNA ligase, found in Prochlorococcus marinus (strain MIT 9313).